The following is a 125-amino-acid chain: MPRYELALILKAMQRPETAATLKRTIEALMDRGAIVRDLENLGERALPYRISAHSQQHNRGGYFLVDFYAPTAAVESMVEHLSRDIDVIRGNIVKHPLTQELKECEGIVPVPLAEKLYSTKKRKK.

It belongs to the bacterial ribosomal protein bS6 family. Component of the mitochondrial small ribosomal subunit (mt-SSU). Mature mammalian 55S mitochondrial ribosomes consist of a small (28S) and a large (39S) subunit. The 28S small subunit contains a 12S ribosomal RNA (12S mt-rRNA) and 30 different proteins. The 39S large subunit contains a 16S rRNA (16S mt-rRNA), a copy of mitochondrial valine transfer RNA (mt-tRNA(Val)), which plays an integral structural role, and 52 different proteins.

The protein resides in the mitochondrion. This is Small ribosomal subunit protein bS6m (MRPS6) from Homo sapiens (Human).